The chain runs to 681 residues: DNA ligase (681 aa).

NAD(+)-binding positions include 34–38, 83–84, and E115; these read DAEYD and SL. K117 serves as the catalytic N6-AMP-lysine intermediate. NAD(+) contacts are provided by R138, E185, K301, and K325. The Zn(2+) site is built by C419, C422, C437, and C443. The BRCT domain maps to 602–681; it reads RKSDVLAGQT…AALLALIGER (80 aa).

Belongs to the NAD-dependent DNA ligase family. LigA subfamily. The cofactor is Mg(2+). Requires Mn(2+) as cofactor.

The catalysed reaction is NAD(+) + (deoxyribonucleotide)n-3'-hydroxyl + 5'-phospho-(deoxyribonucleotide)m = (deoxyribonucleotide)n+m + AMP + beta-nicotinamide D-nucleotide.. DNA ligase that catalyzes the formation of phosphodiester linkages between 5'-phosphoryl and 3'-hydroxyl groups in double-stranded DNA using NAD as a coenzyme and as the energy source for the reaction. It is essential for DNA replication and repair of damaged DNA. This is DNA ligase from Chloroflexus aggregans (strain MD-66 / DSM 9485).